A 395-amino-acid chain; its full sequence is 3-sulfinopropanoyl-CoA desulfinase (395 aa).

FAD contacts are provided by residues 121 to 124, Ser130, and 153 to 156; these read ICIS and YWIT. 243-244 serves as a coordination point for substrate; the sequence is YN. Residues Arg272, Gln339, Ser343, 366 to 370, and Gln387 contribute to the FAD site; that span reads GGTAQ.

This sequence belongs to the acyl-CoA dehydrogenase family. In terms of assembly, homotrimer or homotetramer. FAD serves as cofactor.

The catalysed reaction is 3-sulfinopropanoyl-CoA + H2O = propanoyl-CoA + sulfite + H(+). Catalyzes the conversion 3-sulfinopropanoyl-CoA (3SP-CoA) to propanoyl-CoA by abstraction of sulfite. Does not show dehydrogenase activity. The sequence is that of 3-sulfinopropanoyl-CoA desulfinase from Cupriavidus necator (strain ATCC 43291 / DSM 13513 / CCUG 52238 / LMG 8453 / N-1) (Ralstonia eutropha).